The primary structure comprises 587 residues: Putative adhesin (587 aa).

An N-terminal signal peptide occupies residues Met1–Ala19. Cys211 and Cys261 are joined by a disulfide. An N-linked (GlcNAc...) asparagine glycan is attached at Asn239. 4 tandem repeats follow at residues Ile432–Lys455, Ile466–Lys489, Pro491–Val512, and Pro513–Tyr531. Residues Ile432 to Tyr531 form a 4 X 24 AA approximate tandem repeats, Thr-rich region. Ser562 is lipidated: GPI-anchor amidated serine. Positions Glu563–Ile587 are cleaved as a propeptide — removed in mature form.

Post-translationally, the GPI-anchor is attached to the protein in the endoplasmic reticulum and serves to target the protein to the cell surface. There, the glucosamine-inositol phospholipid moiety is cleaved off and the GPI-modified mannoprotein is covalently attached via its lipidless GPI glycan remnant to the 1,6-beta-glucan of the outer cell wall layer.

The protein localises to the cell membrane. Its subcellular location is the secreted. The protein resides in the cell wall. In terms of biological role, putative adhesion protein. May be involved in cell-cell interaction, interacting with other proteins by salt bridges and hydrogen bonds. The protein is Putative adhesin of Komagataella phaffii (strain ATCC 76273 / CBS 7435 / CECT 11047 / NRRL Y-11430 / Wegner 21-1) (Yeast).